Reading from the N-terminus, the 1408-residue chain is DNA-directed RNA polymerase subunit beta' (1408 aa).

Zn(2+) is bound by residues C70, C72, C85, and C88. D460, D462, and D464 together coordinate Mg(2+). Zn(2+) is bound by residues C814, C888, C895, and C898.

The protein belongs to the RNA polymerase beta' chain family. As to quaternary structure, the RNAP catalytic core consists of 2 alpha, 1 beta, 1 beta' and 1 omega subunit. When a sigma factor is associated with the core the holoenzyme is formed, which can initiate transcription. Mg(2+) is required as a cofactor. Requires Zn(2+) as cofactor.

It catalyses the reaction RNA(n) + a ribonucleoside 5'-triphosphate = RNA(n+1) + diphosphate. Its function is as follows. DNA-dependent RNA polymerase catalyzes the transcription of DNA into RNA using the four ribonucleoside triphosphates as substrates. The chain is DNA-directed RNA polymerase subunit beta' from Shewanella frigidimarina (strain NCIMB 400).